We begin with the raw amino-acid sequence, 251 residues long: 3-deoxy-manno-octulosonate cytidylyltransferase (251 aa).

Belongs to the KdsB family.

Its subcellular location is the cytoplasm. The enzyme catalyses 3-deoxy-alpha-D-manno-oct-2-ulosonate + CTP = CMP-3-deoxy-beta-D-manno-octulosonate + diphosphate. Its pathway is nucleotide-sugar biosynthesis; CMP-3-deoxy-D-manno-octulosonate biosynthesis; CMP-3-deoxy-D-manno-octulosonate from 3-deoxy-D-manno-octulosonate and CTP: step 1/1. It functions in the pathway bacterial outer membrane biogenesis; lipopolysaccharide biosynthesis. Its function is as follows. Activates KDO (a required 8-carbon sugar) for incorporation into bacterial lipopolysaccharide in Gram-negative bacteria. This Brucella ovis (strain ATCC 25840 / 63/290 / NCTC 10512) protein is 3-deoxy-manno-octulosonate cytidylyltransferase.